Reading from the N-terminus, the 331-residue chain is Phenylalanine--tRNA ligase alpha subunit (331 aa).

Glu258 is a binding site for Mg(2+).

It belongs to the class-II aminoacyl-tRNA synthetase family. Phe-tRNA synthetase alpha subunit type 1 subfamily. Tetramer of two alpha and two beta subunits. Requires Mg(2+) as cofactor.

The protein resides in the cytoplasm. It catalyses the reaction tRNA(Phe) + L-phenylalanine + ATP = L-phenylalanyl-tRNA(Phe) + AMP + diphosphate + H(+). The protein is Phenylalanine--tRNA ligase alpha subunit (pheS) of Synechocystis sp. (strain ATCC 27184 / PCC 6803 / Kazusa).